The chain runs to 976 residues: MSHRNKALVAIVAGTALLISSGAAIGQAAIADERSGKAMQTLNVDFATETGNFRGGASGTLYGLGDDGSPADAILDGAQVENSSQKPPSGTQHPSGDALALENQFFSNGGNELAVYMQDYYPDWSYNSGNRPSDSRTYVLDVPVDDPSYGTYTNGGDGVWDYEQVTEIVINKVLANTEHPDQYTFIPFNEPDGGNWYASGDNASAKIFRTFLSDWDSEYKLIQKIWQQYKNGEKPSKVKPTADHARVAGPGDCVYRQNRSSAFLSHAKSQNTLPDVFVWHELGKESLSSFRSHYESYRKLEKKYGINPIDVNITEYGELRDMSVPGQLIQWQSMFEDEKVQAETAYWNYAGNLSDNMARANSANAGWWQFKWYGDLRGAQTVKVSSDYMNKADSLQGIAAIDRTNKKATVLYGGANDANADQVKNDGSNIPVTVHLTGLDQNLFGSTVDVEVRENAFTGPDGVAATPRVVNALSDVDISSGTLDVTTTSVDRYASYQLIVTPHQDRVLSIDNAAAGRALLVEEVENTVLSGGAQTYIKTPWGDGWNYFMTSGNGDVGSFKTGSIASWTVDVPADGIYRFQVISGNTGFPGDNDVSVDGQSAGTIHFGAELAMKPAAKWLYRGSGEVLLRLKQGQHQIQLHGSSMDNTLDKFLLYQVSASDNSLDRIEYPADQFRLESGALLTYDQDGARGFASLNGGEAKLFAHAWESGYHSVKVVYTASRGDSMVLSVNGTSVTTITAESDGLQSSMVNVALSEGINKLELSGDAVSIRDITTCRDAADDSNAITLEAESLQLAGGAQTRENSASNASGYSYVTGLGKQFVTEESGAFGMGDQTRVVTLDTNNTPKIADAVRGTVTIPAGTIPAGKFNMVVRFSNDAFIGKHDYNPQIVDLGLQVRDGTANGEEVARGAFRYTYSDSNFLERAMTVETSGSALVLGNWDEPGVGAGAVSWGVGPNLDYVQFYPVMVGDVYHQSLA.

The first 28 residues, 1–28 (MSHRNKALVAIVAGTALLISSGAAIGQA), serve as a signal peptide directing secretion. Glu190 (proton donor) is an active-site residue. Glu315 serves as the catalytic Nucleophile. A CBM6 domain is found at 519–654 (LLVEEVENTV…DNTLDKFLLY (136 aa)).

This sequence belongs to the glycosyl hydrolase 39 family.

It localises to the secreted. It catalyses the reaction Hydrolysis of beta-L-Arap-(1-&gt;3)-L-Araf disaccharides from non-reducing terminals in branches of type II arabinogalactan attached to proteins.. Its function is as follows. Hydrolase involved in the degradation of the gum arabic arabinogalactan protein (AGP) and larch AGP. Catalyzes the release of 3-O-beta-L-arabinopyranosyl-L-arabinose (beta-L-Arap-(1-&gt;3)-L-Ara) from gum arabic AGP and larch AGP. Also cleaves a small amount of beta-L-Arap-(1-&gt;3)-L-Ara from sugar beet arabinan, but wheat AGP cannot be used as a substrate. Can also release 3-O-alpha-D-galactopyranosyl-L-arabinose (alpha-D-Galp-(1-&gt;3)-L-Ara) from gum arabic AGP, with low efficiency. This is 3-O-beta-L-arabinopyranosyl-alpha-L-arabinofuranosidase from Bifidobacterium pseudocatenulatum.